A 275-amino-acid chain; its full sequence is 4-hydroxy-tetrahydrodipicolinate reductase (275 aa).

12–17 (GAAGRM) lines the NAD(+) pocket. Residue R39 coordinates NADP(+). NAD(+) contacts are provided by residues 102-104 (GTT) and 126-129 (SGNM). Catalysis depends on H160, which acts as the Proton donor/acceptor. (S)-2,3,4,5-tetrahydrodipicolinate is bound at residue H161. The active-site Proton donor is K164. (S)-2,3,4,5-tetrahydrodipicolinate is bound at residue 170–171 (GT).

This sequence belongs to the DapB family.

The protein localises to the cytoplasm. The enzyme catalyses (S)-2,3,4,5-tetrahydrodipicolinate + NAD(+) + H2O = (2S,4S)-4-hydroxy-2,3,4,5-tetrahydrodipicolinate + NADH + H(+). The catalysed reaction is (S)-2,3,4,5-tetrahydrodipicolinate + NADP(+) + H2O = (2S,4S)-4-hydroxy-2,3,4,5-tetrahydrodipicolinate + NADPH + H(+). The protein operates within amino-acid biosynthesis; L-lysine biosynthesis via DAP pathway; (S)-tetrahydrodipicolinate from L-aspartate: step 4/4. Catalyzes the conversion of 4-hydroxy-tetrahydrodipicolinate (HTPA) to tetrahydrodipicolinate. This is 4-hydroxy-tetrahydrodipicolinate reductase from Agrobacterium fabrum (strain C58 / ATCC 33970) (Agrobacterium tumefaciens (strain C58)).